A 158-amino-acid polypeptide reads, in one-letter code: Glycine-rich RNA-binding protein 2, mitochondrial (158 aa).

The transit peptide at 1 to 34 (MAFCNKLGGLLRQNISSNGNVPVTSMLGSLRLMS) directs the protein to the mitochondrion. Positions 35–113 (TKLFIGGLSW…RHIRVNPAND (79 aa)) constitute an RRM domain. Ser-43 is modified (phosphoserine). The tract at residues 122 to 157 (GGGGGYSGGGGGYGGGGGGYGGGGGGYGGGGDGGGG) is glycine-rich (GR) required for cell-to-cell movement.

Belongs to the GR-RBP family. Binds to small phloem-mobile single-stranded RNAs (ss-sRNA, e.g. small interfering RNA (siRNA) and microRNA (miRNA)) in the phloeme exudate, including viral-derived sRNA (vsiRNA). Interacts with ORRM2, RBG3/ORRM3 and RBG5/ORRM4.

It is found in the mitochondrion. It localises to the secreted. Promotes the cis-splicing and editing of several mitochondrial RNAs (including NAD5 transcripts). Plays a role in RNA transcription or processing during stress. Binds RNAs and DNAs sequence with a preference to single-stranded nucleic acids. Displays strong affinity to poly(U) sequence. Exerts cold and freezing tolerance, probably by exhibiting an RNA chaperone activity during the cold and freezing adaptation process. Mediates cell-to-cell trafficking of RNA interference (RNAi) signals (small RNAs (sRNA), e.g. small interfering RNA (siRNA) and microRNA (miRNA)) which regulate growth and development, as well as responses to environmental inputs, including pathogen attack; can compromise zucchini yellow mosaic virus (ZYMV) and tobacco rattle virus (TRV) infections at the early stage. The polypeptide is Glycine-rich RNA-binding protein 2, mitochondrial (Arabidopsis thaliana (Mouse-ear cress)).